The sequence spans 228 residues: Ribonuclease S-1 (228 aa).

Residues 1 to 27 (MGVTGMTYMFTMVFSLIVLILSSSTVG) form the signal peptide. Residue Gln36 coordinates RNA. Cys42 and Cys49 are joined by a disulfide. His60 provides a ligand contact to RNA. His60 acts as the Proton donor in catalysis. A disulfide bridge connects residues Cys75 and Cys119. The N-linked (GlcNAc...) asparagine glycan is linked to Asn87. 98–99 (NV) is a binding site for RNA. Residue Asn101 is glycosylated (N-linked (GlcNAc...) asparagine). RNA-binding positions include Phe108, 111–112 (KE), and 115–116 (KH). The active site involves Glu112. His116 acts as the Proton acceptor in catalysis. N-linked (GlcNAc...) asparagine glycosylation is found at Asn144, Asn157, and Asn175. Cystine bridges form between Cys183–Cys222 and Cys199–Cys210.

Belongs to the RNase T2 family. In terms of processing, N-linked core structure at Asn-87 and Asn-101 contains xylose and fucose or consists of disaccharide (GlcNAc-GlcNAc). N-linked core structure at Asn-144 contains xylose.

The catalysed reaction is a ribonucleotidyl-ribonucleotide-RNA + H2O = a 3'-end 3'-phospho-ribonucleotide-RNA + a 5'-end dephospho-ribonucleoside-RNA + H(+). Functionally, self-incompatibility (SI) is the inherited ability of a flowering plant to prevent self-fertilization by discriminating between self and non-self pollen during pollination. In many species, self-incompatibility is controlled by the single, multiallelic locus S. The sequence is that of Ribonuclease S-1 from Pyrus pyrifolia (Chinese pear).